We begin with the raw amino-acid sequence, 78 residues long: UPF0349 protein SSP1836 (78 aa).

Belongs to the UPF0349 family.

The protein is UPF0349 protein SSP1836 of Staphylococcus saprophyticus subsp. saprophyticus (strain ATCC 15305 / DSM 20229 / NCIMB 8711 / NCTC 7292 / S-41).